The primary structure comprises 250 residues: MARRYDQRTTIFSPEGRVYQVEYAMTAIRHAGATVGILAKDGIVLAAEKKTTAKLLDSSTSISEKMFKIDEHVVCAVAGITSDANILINYARLSSQRFFYQYQEPMPVEQLVSQICDTKQGYTQYGGLRPFGVSFLYAGWDRHYGFQLYQSDPSGNFAGWKATSIGGENSQVAQSVLRSNYKPDISLKEALQLALKVLTKTMDRSNINSEKLEFSYFTKQGDNVVYHIFTAAELDAFIKETDLEQETEDN.

This sequence belongs to the peptidase T1A family. As to quaternary structure, the 26S proteasome consists of a 20S proteasome core and two 19S regulatory subunits. The 20S proteasome core is composed of 28 subunits that are arranged in four stacked rings, resulting in a barrel-shaped structure. The two end rings are each formed by seven alpha subunits, and the two central rings are each formed by seven beta subunits. The catalytic chamber with the active sites is on the inside of the barrel.

It localises to the cytoplasm. It is found in the nucleus. The proteasome is a multicatalytic proteinase complex which is characterized by its ability to cleave peptides with Arg, Phe, Tyr, Leu, and Glu adjacent to the leaving group at neutral or slightly basic pH. The proteasome has an ATP-dependent proteolytic activity. This is Proteasome subunit alpha type-4 (psmA4) from Dictyostelium discoideum (Social amoeba).